A 411-amino-acid chain; its full sequence is C6 finger domain transcription factor hasA (411 aa).

Positions 1-17 (MTSTLPYLTSPPATHPS) are enriched in polar residues. The disordered stretch occupies residues 1–21 (MTSTLPYLTSPPATHPSNSDH). Positions 28–54 (CDSCHQCKVKCSGGSPCFRCTSKGLNC) form a DNA-binding region, zn(2)-C6 fungal-type.

Its subcellular location is the nucleus. Functionally, transcription factor; part of the gene cluster that mediates the biosynthesis of hexadehydro-astechrome (HAS), a tryptophan-derived iron(III)-complex that acts as a virulence factor in infected mice. Positively regulates the expression of the HAS biosynthetic genes. This chain is C6 finger domain transcription factor hasA, found in Aspergillus fumigatus (strain CBS 144.89 / FGSC A1163 / CEA10) (Neosartorya fumigata).